The following is a 500-amino-acid chain: Lysine--tRNA ligase (500 aa).

Mg(2+) contacts are provided by Glu410 and Glu417.

The protein belongs to the class-II aminoacyl-tRNA synthetase family. In terms of assembly, homodimer. Mg(2+) is required as a cofactor.

The protein localises to the cytoplasm. It catalyses the reaction tRNA(Lys) + L-lysine + ATP = L-lysyl-tRNA(Lys) + AMP + diphosphate. This chain is Lysine--tRNA ligase, found in Shewanella amazonensis (strain ATCC BAA-1098 / SB2B).